A 757-amino-acid chain; its full sequence is 5-methyltetrahydropteroyltriglutamate--homocysteine methyltransferase (757 aa).

5-methyltetrahydropteroyltri-L-glutamate-binding positions include 15-18 (RELK) and Lys114. L-homocysteine-binding positions include 428–430 (IGS) and Glu481. L-methionine-binding positions include 428–430 (IGS) and Glu481. 5-methyltetrahydropteroyltri-L-glutamate contacts are provided by residues 512 to 513 (RC) and Trp558. Asp596 provides a ligand contact to L-homocysteine. Asp596 contacts L-methionine. 5-methyltetrahydropteroyltri-L-glutamate is bound at residue Glu602. Residues His639, Cys641, and Glu663 each coordinate Zn(2+). The active-site Proton donor is His692. A Zn(2+)-binding site is contributed by Cys724.

Belongs to the vitamin-B12 independent methionine synthase family. Zn(2+) serves as cofactor.

It catalyses the reaction 5-methyltetrahydropteroyltri-L-glutamate + L-homocysteine = tetrahydropteroyltri-L-glutamate + L-methionine. It functions in the pathway amino-acid biosynthesis; L-methionine biosynthesis via de novo pathway; L-methionine from L-homocysteine (MetE route): step 1/1. Catalyzes the transfer of a methyl group from 5-methyltetrahydrofolate to homocysteine resulting in methionine formation. This chain is 5-methyltetrahydropteroyltriglutamate--homocysteine methyltransferase, found in Lactococcus lactis subsp. cremoris (strain MG1363).